The primary structure comprises 449 residues: MSSKPFTPEEARRIVQVLQKPAVFLNMTTDWPALHWTVEHLSACLTKRIRFRVGKRSEDMAPLFETECSYVEATIKEFLSWTANDGEPLVGPFLDYHCKEFWAYADYKYIAQLFQDKPAMFQDVVWSDFGFPGRDGRDSTLWIGTQCANTPCHLDSYGCNLVFQIQGRKRWHLFPPDDTACLYPTRVPYEESSVFSHVNVIRPDLKKFPAYGRARLYTVTLQPGQVLFVPRHWWHYVESVDPVTVSVNSWIEMDMDDEARVAEALTKTIVCAVKSSPSLDNSDQWLNPTEDGVSSHDENMQYLNLAVKVCMNKKRDDIEDQPKAEAVKRDFSGVLKSPASPPSLVSFGPHLIPVHLTEKPQCSSTKDSCCFSCTDSPQCQITTKDQDKLRSDNKLGQRSGQSVLQDTENPGGSGEMHISTNDVLECLVHPDVIALVTRLIMCRQRELHS.

Positions 102–266 (WAYADYKYIA…DEARVAEALT (165 aa)) constitute a JmjC domain. The span at 385 to 395 (DQDKLRSDNKL) shows a compositional bias: basic and acidic residues. Residues 385–416 (DQDKLRSDNKLGQRSGQSVLQDTENPGGSGEM) are disordered. Polar residues predominate over residues 396-410 (GQRSGQSVLQDTENP).

Its subcellular location is the cytoplasm. Functionally, may play a role in cellular stress response. The sequence is that of HSPB1-associated protein 1 homolog (hspbap1) from Danio rerio (Zebrafish).